A 229-amino-acid chain; its full sequence is UPF0758 protein CLL_A0562 (229 aa).

The MPN domain occupies 107–229 (KIMSPNDLAM…FISLKEKGFI (123 aa)). Residues H178, H180, and D191 each contribute to the Zn(2+) site. Residues 178 to 191 (HNHPSGDPTPSKED) carry the JAMM motif motif.

It belongs to the UPF0758 family.

This Clostridium botulinum (strain Eklund 17B / Type B) protein is UPF0758 protein CLL_A0562.